Here is a 442-residue protein sequence, read N- to C-terminus: Glutamyl-tRNA(Gln) amidotransferase subunit A (442 aa).

Catalysis depends on charge relay system residues Lys-50 and Ser-125. Ser-149 serves as the catalytic Acyl-ester intermediate.

It belongs to the amidase family. GatA subfamily. In terms of assembly, heterotrimer of A, B and C subunits.

It carries out the reaction L-glutamyl-tRNA(Gln) + L-glutamine + ATP + H2O = L-glutaminyl-tRNA(Gln) + L-glutamate + ADP + phosphate + H(+). Functionally, allows the formation of correctly charged Gln-tRNA(Gln) through the transamidation of misacylated Glu-tRNA(Gln) in organisms which lack glutaminyl-tRNA synthetase. The reaction takes place in the presence of glutamine and ATP through an activated gamma-phospho-Glu-tRNA(Gln). This Nitratiruptor sp. (strain SB155-2) protein is Glutamyl-tRNA(Gln) amidotransferase subunit A.